We begin with the raw amino-acid sequence, 210 residues long: Helix-loop-helix protein 26 (210 aa).

The span at 1 to 15 (MSSSPTSSSSGSPSS) shows a compositional bias: low complexity. The interval 1–33 (MSSSPTSSSSGSPSSHGHRSETEKQRRDDTNDL) is disordered. The 52-residue stretch at 14–65 (SSHGHRSETEKQRRDDTNDLLNEFKKIVQKSESEKLSKEEVLFRIVKLLSGI) folds into the bHLH domain. Over residues 18–33 (HRSETEKQRRDDTNDL) the composition is skewed to basic and acidic residues.

Homodimer; binds to DNA as a homodimer. In terms of tissue distribution, expressed in intestinal cells (at protein level).

It localises to the nucleus. In terms of biological role, as a homodimer binds DNA via the E-box sequence 5'-CACGTG-3'. Represses lag-2 transcription during embryogenesis via Notch signaling, in an unc-37-dependent manner. Also represses tbx-37 independent of Notch signaling. In the intestine, plays a role in probiotic-mediated protection against infections by pathogens such as S.enterica. This is most likely by positively regulating the expression of genes such as bar-1 upon exposure to probiotic bacteria such as the E.faecium. The polypeptide is Helix-loop-helix protein 26 (Caenorhabditis elegans).